The chain runs to 200 residues: Glycerol-3-phosphate acyltransferase (200 aa).

The next 5 membrane-spanning stretches (helical) occupy residues 6–26 (LTLGMILAAYLAGSISSAVLV), 56–76 (SAAMVLFFDMLKGALPAYIAF), 82–102 (QVALGAIAIAACLGHIFPIFF), 118–138 (APIGHELALALMVTWIVMVLI), and 141–161 (YSSLAAITTAMLAPIYTWFLD).

Belongs to the PlsY family. In terms of assembly, probably interacts with PlsX.

Its subcellular location is the cell inner membrane. The catalysed reaction is an acyl phosphate + sn-glycerol 3-phosphate = a 1-acyl-sn-glycero-3-phosphate + phosphate. It participates in lipid metabolism; phospholipid metabolism. In terms of biological role, catalyzes the transfer of an acyl group from acyl-phosphate (acyl-PO(4)) to glycerol-3-phosphate (G3P) to form lysophosphatidic acid (LPA). This enzyme utilizes acyl-phosphate as fatty acyl donor, but not acyl-CoA or acyl-ACP. In Shewanella sediminis (strain HAW-EB3), this protein is Glycerol-3-phosphate acyltransferase.